We begin with the raw amino-acid sequence, 206 residues long: Pyridoxine/pyridoxamine 5'-phosphate oxidase (206 aa).

Residues 53–58, 68–69, Lys75, and Gln97 contribute to the FMN site; these read RMVLLK and YT. Lys58 is a binding site for substrate. 3 residues coordinate substrate: Tyr115, Arg119, and Ser123. Residues 132–133 and Trp177 contribute to the FMN site; that span reads QS. A substrate-binding site is contributed by 183 to 185; the sequence is RLH. Arg187 is an FMN binding site.

This sequence belongs to the pyridoxamine 5'-phosphate oxidase family. In terms of assembly, homodimer. FMN serves as cofactor.

It catalyses the reaction pyridoxamine 5'-phosphate + O2 + H2O = pyridoxal 5'-phosphate + H2O2 + NH4(+). The enzyme catalyses pyridoxine 5'-phosphate + O2 = pyridoxal 5'-phosphate + H2O2. It functions in the pathway cofactor metabolism; pyridoxal 5'-phosphate salvage; pyridoxal 5'-phosphate from pyridoxamine 5'-phosphate: step 1/1. It participates in cofactor metabolism; pyridoxal 5'-phosphate salvage; pyridoxal 5'-phosphate from pyridoxine 5'-phosphate: step 1/1. Functionally, catalyzes the oxidation of either pyridoxine 5'-phosphate (PNP) or pyridoxamine 5'-phosphate (PMP) into pyridoxal 5'-phosphate (PLP). The chain is Pyridoxine/pyridoxamine 5'-phosphate oxidase from Rhizobium meliloti (strain 1021) (Ensifer meliloti).